The primary structure comprises 353 residues: Photosystem II protein D1 (353 aa).

At threonine 2 the chain carries N-acetylthreonine. Residue threonine 2 is modified to Phosphothreonine. Helical transmembrane passes span 29–46, 118–133, and 142–156; these read YIGW…TATS, HFFL…EWEL, and WIAV…AATA. Histidine 118 lines the chlorophyll a pocket. Residue tyrosine 126 coordinates pheophytin a. Residues aspartate 170 and glutamate 189 each coordinate [CaMn4O5] cluster. The helical transmembrane segment at 197-218 threads the bilayer; that stretch reads FHMLGVAGVFGGSLFSAMHGSL. A chlorophyll a-binding site is contributed by histidine 198. Residues histidine 215 and 264-265 contribute to the a quinone site; that span reads SF. Position 215 (histidine 215) interacts with Fe cation. Histidine 272 lines the Fe cation pocket. A helical membrane pass occupies residues 274 to 288; that stretch reads FLAAWPVVGIWFTAL. Histidine 332, glutamate 333, aspartate 342, and alanine 344 together coordinate [CaMn4O5] cluster. Residues 345 to 353 constitute a propeptide that is removed on maturation; the sequence is SVEAPSVNG.

Belongs to the reaction center PufL/M/PsbA/D family. In terms of assembly, PSII is composed of 1 copy each of membrane proteins PsbA, PsbB, PsbC, PsbD, PsbE, PsbF, PsbH, PsbI, PsbJ, PsbK, PsbL, PsbM, PsbT, PsbX, PsbY, PsbZ, Psb30/Ycf12, at least 3 peripheral proteins of the oxygen-evolving complex and a large number of cofactors. It forms dimeric complexes. The D1/D2 heterodimer binds P680, chlorophylls that are the primary electron donor of PSII, and subsequent electron acceptors. It shares a non-heme iron and each subunit binds pheophytin, quinone, additional chlorophylls, carotenoids and lipids. D1 provides most of the ligands for the Mn4-Ca-O5 cluster of the oxygen-evolving complex (OEC). There is also a Cl(-1) ion associated with D1 and D2, which is required for oxygen evolution. The PSII complex binds additional chlorophylls, carotenoids and specific lipids. is required as a cofactor. In terms of processing, tyr-161 forms a radical intermediate that is referred to as redox-active TyrZ, YZ or Y-Z. C-terminally processed by CTPA; processing is essential to allow assembly of the oxygen-evolving complex and thus photosynthetic growth.

It is found in the plastid. Its subcellular location is the chloroplast thylakoid membrane. The enzyme catalyses 2 a plastoquinone + 4 hnu + 2 H2O = 2 a plastoquinol + O2. Functionally, photosystem II (PSII) is a light-driven water:plastoquinone oxidoreductase that uses light energy to abstract electrons from H(2)O, generating O(2) and a proton gradient subsequently used for ATP formation. It consists of a core antenna complex that captures photons, and an electron transfer chain that converts photonic excitation into a charge separation. The D1/D2 (PsbA/PsbD) reaction center heterodimer binds P680, the primary electron donor of PSII as well as several subsequent electron acceptors. The polypeptide is Photosystem II protein D1 (Chaetosphaeridium globosum (Charophycean green alga)).